We begin with the raw amino-acid sequence, 154 residues long: Lipoprotein signal peptidase (154 aa).

The next 3 helical transmembrane spans lie at 4–24, 62–82, and 84–104; these read IIIP…KLWI, LFTL…MKHI, and GSYW…GNFI. Catalysis depends on residues Asp114 and Asp130. A helical membrane pass occupies residues 125–145; sequence IFNVADSYLTIGIICLMIALW.

Belongs to the peptidase A8 family.

Its subcellular location is the cell membrane. The catalysed reaction is Release of signal peptides from bacterial membrane prolipoproteins. Hydrolyzes -Xaa-Yaa-Zaa-|-(S,diacylglyceryl)Cys-, in which Xaa is hydrophobic (preferably Leu), and Yaa (Ala or Ser) and Zaa (Gly or Ala) have small, neutral side chains.. It functions in the pathway protein modification; lipoprotein biosynthesis (signal peptide cleavage). Functionally, this protein specifically catalyzes the removal of signal peptides from prolipoproteins. This Streptococcus agalactiae serotype Ia (strain ATCC 27591 / A909 / CDC SS700) protein is Lipoprotein signal peptidase.